A 349-amino-acid polypeptide reads, in one-letter code: C-X-C chemokine receptor type 1 (349 aa).

Over 1–44 (MAEAEYFIWIAPEGDFEEEFGNITRMLPTGEYFSPCKRVPMTNR) the chain is Extracellular. An N-linked (GlcNAc...) asparagine glycan is attached at N22. The helical transmembrane segment at 45–71 (QAVVVFYALVFLLSLLGNSLVMLVILY) threads the bilayer. The Cytoplasmic segment spans residues 72–80 (RRRTRSVTD). A helical transmembrane segment spans residues 81-101 (VYVLNLAIADLLFSLTLPFLA). Residues 102 to 116 (VSKWKGWIFGTPLCK) lie on the Extracellular side of the membrane. C115 and C192 are joined by a disulfide. A helical membrane pass occupies residues 117–138 (MVSLLKEVNFFSGILLLACISV). At 139–159 (DRYLAIVHATRTLTRKRYLVK) the chain is on the cytoplasmic side. A helical transmembrane segment spans residues 160-179 (FVCMGTWGLSLVLSLPFAIF). Residues 180-204 (RQAYKPYRSGTVCYEVLGEATADLR) lie on the Extracellular side of the membrane. A helical membrane pass occupies residues 205–225 (ITLRGLSHIFGFLLPLFIMLV). The Cytoplasmic portion of the chain corresponds to 226–247 (CYGLTLRTLFKAHMRQKRRAMW). The chain crosses the membrane as a helical span at residues 248-269 (VIFAVVLVFLLCCLPYNLVLLS). Residues 270 to 290 (DTLLGAHLIQDTCERRNNIDQ) are Extracellular-facing. A helical transmembrane segment spans residues 291 to 313 (ALYITEILGFSHSCLNPVIYAFV). Over 314–349 (GQSFRHEFLKILANLVHKEVLTHHSASFRTSLTTIY) the chain is Cytoplasmic.

Belongs to the G-protein coupled receptor 1 family. Interacts with IL8. Interacts with GNAI2.

Its subcellular location is the cell membrane. Functionally, receptor to interleukin-8, which is a powerful neutrophils chemotactic factor. Binding of IL-8 to the receptor causes activation of neutrophils. This response is mediated via a G-protein that activates a phosphatidylinositol-calcium second messenger system. This chain is C-X-C chemokine receptor type 1 (Cxcr1), found in Rattus norvegicus (Rat).